Consider the following 182-residue polypeptide: UPF0397 protein BCE_2667 (182 aa).

The next 5 helical transmembrane spans lie at 9–29 (VVAI…GFSI), 40–60 (AILT…IGLI), 71–91 (WGIW…MGLI), 114–134 (ITGL…DIIV), and 142–162 (IVIQ…VLGL).

Belongs to the UPF0397 family.

It localises to the cell membrane. The protein is UPF0397 protein BCE_2667 of Bacillus cereus (strain ATCC 10987 / NRS 248).